The sequence spans 395 residues: Multidrug resistance protein MdtL (395 aa).

A run of 12 helical transmembrane segments spans residues 4–24, 42–62, 69–89, 93–113, 131–151, 158–178, 217–237, 247–267, 271–291, 295–315, 328–350, and 355–377; these read FLLCSFALVLLYPAGIDMYLV, IAFSVYLAGMATAMLFAGKIA, PVAIVGAIVFMMASLLCSRAS, LFLSGRFLQGIGAGGCYVVAF, LLNGITCIVPVLAPVVGHLIM, SLFYTMSAMGIIVGLLSLFIL, VSVILTFVNASPVLLMEVMGF, ALTAGVSMVVSFSTPFALGLF, TLMLVSQGLFLTAGVTLSLAH, VTLFGLTLICAGFSVGFGVAM, VASSTLGIAQVCGSSLWIWLAAI, and AMNMLIGILIGCSIVSILLIFSV.

This sequence belongs to the major facilitator superfamily. DHA1 family. MdtL (TC 2.A.1.2.22) subfamily.

Its subcellular location is the cell inner membrane. This is Multidrug resistance protein MdtL from Salmonella dublin (strain CT_02021853).